The chain runs to 309 residues: Coproporphyrin III ferrochelatase (309 aa).

Residues tyrosine 12, threonine 14, arginine 29, 45 to 46 (RY), serine 53, and tyrosine 124 each bind Fe-coproporphyrin III. Residues histidine 182 and glutamate 263 each contribute to the Fe(2+) site.

This sequence belongs to the ferrochelatase family. As to quaternary structure, monomer.

Its subcellular location is the cytoplasm. The enzyme catalyses Fe-coproporphyrin III + 2 H(+) = coproporphyrin III + Fe(2+). The protein operates within porphyrin-containing compound metabolism; protoheme biosynthesis. Its function is as follows. Involved in coproporphyrin-dependent heme b biosynthesis. Catalyzes the insertion of ferrous iron into coproporphyrin III to form Fe-coproporphyrin III. This chain is Coproporphyrin III ferrochelatase, found in Listeria monocytogenes serovar 1/2a (strain ATCC BAA-679 / EGD-e).